A 206-amino-acid polypeptide reads, in one-letter code: Large ribosomal subunit protein uL4 (206 aa).

Residues 47–77 (GTHDTKTRGEVSGGGRKPWRQKGTGRARHGS) form a disordered region. Over residues 63–77 (KPWRQKGTGRARHGS) the composition is skewed to basic residues.

The protein belongs to the universal ribosomal protein uL4 family. As to quaternary structure, part of the 50S ribosomal subunit.

In terms of biological role, one of the primary rRNA binding proteins, this protein initially binds near the 5'-end of the 23S rRNA. It is important during the early stages of 50S assembly. It makes multiple contacts with different domains of the 23S rRNA in the assembled 50S subunit and ribosome. Forms part of the polypeptide exit tunnel. The sequence is that of Large ribosomal subunit protein uL4 from Carboxydothermus hydrogenoformans (strain ATCC BAA-161 / DSM 6008 / Z-2901).